The primary structure comprises 197 residues: uncharacterized protein (197 aa).

The next 4 helical transmembrane spans lie at 9 to 29 (IYILQTLGSLYLLIVLLRFIL), 67 to 87 (LASLVLAILIQLVLMILILML), 104 to 124 (IIAVTSLFLKVFFFALIISVI), and 160 to 180 (GLDLSPIFAFLALKLIDMLVI).

This sequence belongs to the YggT family.

Its subcellular location is the cell membrane. This is an uncharacterized protein from Pseudomonas aeruginosa (strain ATCC 15692 / DSM 22644 / CIP 104116 / JCM 14847 / LMG 12228 / 1C / PRS 101 / PAO1).